Consider the following 418-residue polypeptide: Mitochondrial outer membrane protein SLC25A46 (418 aa).

Serine 32 and serine 35 each carry phosphoserine. A Phosphothreonine modification is found at threonine 45. The segment at 46 to 96 (PPDIPGSRNLHWGEKSPSYGVPSAPPTLEGSAEEPFPGGGEGPRPGPSSEQ) is disordered. The stretch at 96–187 (QLNRFAGFGI…GIISEFTPLP (92 aa)) is one Solcar 1 repeat. 6 helical membrane passes run 103–123 (FGIG…CIVL), 167–187 (FIVQ…TPLP), 202–222 (HLLL…ASLI), 258–278 (LLPL…HYII), 314–334 (FPEL…LYPL), and 382–402 (VFGF…HATI). The Solcar 2 repeat unit spans residues 311 to 413 (DAYFPELIAN…QITKMIYSTL (103 aa)).

Belongs to the mitochondrial carrier (TC 2.A.29) family. As to quaternary structure, associates with the mitochondrial contact site and cristae organizing system (MICOS) complex. May associate with the endoplasmic reticulum membrane protein complex (EMC).

The protein localises to the mitochondrion outer membrane. Functionally, transmembrane protein of the mitochondrial outer membrane that controls mitochondrial organization. May regulate the assembly of the MICOS (mitochondrial contact site and cristae organizing system) complex which is essential to the biogenesis and dynamics of mitochondrial cristae, the inwards folds of the inner mitochondrial membrane. Through its interaction with the EMC (endoplasmic reticulum membrane protein complex), could regulate mitochondrial lipid homeostasis and thereby mitochondrial fission. The chain is Mitochondrial outer membrane protein SLC25A46 from Mus musculus (Mouse).